The chain runs to 412 residues: CapZ-interacting protein (412 aa).

Disordered regions lie at residues 1 to 84 and 99 to 412; these read MEER…KSSP and ALLP…DTRM. The span at 7 to 20 shows a compositional bias: polar residues; the sequence is ETNSNVDSSAQPSV. Residues S68, S82, S83, S105, S108, S116, S120, and S123 each carry the phosphoserine modification. T124 is modified (phosphothreonine). Phosphoserine occurs at positions 126, 127, 135, and 143. A compositionally biased stretch (basic residues) spans 159-176; it reads VRTRGSIKRRPPSRRFRR. Phosphoserine occurs at positions 177, 179, and 216. Phosphothreonine occurs at positions 243 and 256. Basic and acidic residues predominate over residues 248-258; it reads EKPEELVRTPE. The residue at position 297 (S297) is a Phosphoserine. 2 stretches are compositionally biased toward basic and acidic residues: residues 298-312 and 319-330; these read PREETTPGEHTDTGK and SEERVADEDRLG. Phosphoserine is present on residues S333 and S401.

Interacts with CAPZA2 and CAPZB. Dephosphorylation results in its dissociation from CAPZA2.

Its function is as follows. Stress-induced phosphorylation of CAPZIP may regulate the ability of F-actin-capping protein to remodel actin filament assembly. The chain is CapZ-interacting protein (Rcsd1) from Mus musculus (Mouse).